A 591-amino-acid chain; its full sequence is Glucose-6-phosphate isomerase (591 aa).

Glutamate 380 acts as the Proton donor in catalysis. Residues histidine 411 and lysine 540 contribute to the active site.

The protein belongs to the GPI family. As to quaternary structure, homodimer.

It is found in the cytoplasm. It carries out the reaction alpha-D-glucose 6-phosphate = beta-D-fructose 6-phosphate. Its pathway is carbohydrate degradation; glycolysis; D-glyceraldehyde 3-phosphate and glycerone phosphate from D-glucose: step 2/4. This Plasmodium falciparum protein is Glucose-6-phosphate isomerase (GGI.R1).